A 653-amino-acid chain; its full sequence is Threonine--tRNA ligase (653 aa).

The TGS domain occupies M1–K61. Residues D243–P542 form a catalytic region. Residues C338, H389, and H519 each contribute to the Zn(2+) site.

This sequence belongs to the class-II aminoacyl-tRNA synthetase family. Homodimer. Zn(2+) is required as a cofactor.

Its subcellular location is the cytoplasm. The enzyme catalyses tRNA(Thr) + L-threonine + ATP = L-threonyl-tRNA(Thr) + AMP + diphosphate + H(+). Catalyzes the attachment of threonine to tRNA(Thr) in a two-step reaction: L-threonine is first activated by ATP to form Thr-AMP and then transferred to the acceptor end of tRNA(Thr). Also edits incorrectly charged L-seryl-tRNA(Thr). This is Threonine--tRNA ligase from Porphyromonas gingivalis (strain ATCC BAA-308 / W83).